The sequence spans 347 residues: MVSVKPLKFEDDELLLLDQRKLPGKEEYFTCKTYQDVHFAIKEMVCRGAPLIGAVGAYGVALACREFINESQEKFQQETKRAISELSSARPTAVNLFWALNKMNKLLGQVMEENTAPEDIYPIILNEAHKISDQELQRNYRIAEFGDQVISNGDKILTHCNTGALATTGYGTALGVIRQAHYNHKDIFVYVDETRPRLQGAKLTAWELKQEQLPFALIPDSSAAVLIKNGDIDVIFVGADRIASNGDTANKIGTFMLSILAKKYKVPFYVVAPVSTIDFQAKNGDDITIEERSSKEVTEIDGVRVAPTDIQVYNPAFDITPAENITGIITEKGIIGPNNREIMTIQE.

Substrate-binding positions include 47–49 (RGA), Arg-90, and Gln-199. Catalysis depends on Asp-240, which acts as the Proton donor. Position 250-251 (250-251 (NK)) interacts with substrate.

It belongs to the eIF-2B alpha/beta/delta subunits family. MtnA subfamily.

It carries out the reaction 5-(methylsulfanyl)-alpha-D-ribose 1-phosphate = 5-(methylsulfanyl)-D-ribulose 1-phosphate. The protein operates within amino-acid biosynthesis; L-methionine biosynthesis via salvage pathway; L-methionine from S-methyl-5-thio-alpha-D-ribose 1-phosphate: step 1/6. In terms of biological role, catalyzes the interconversion of methylthioribose-1-phosphate (MTR-1-P) into methylthioribulose-1-phosphate (MTRu-1-P). This Natranaerobius thermophilus (strain ATCC BAA-1301 / DSM 18059 / JW/NM-WN-LF) protein is Methylthioribose-1-phosphate isomerase.